We begin with the raw amino-acid sequence, 506 residues long: Glutamate--tRNA ligase (506 aa).

Positions 12 to 22 (PSPTGDPHVGT) match the 'HIGH' region motif. The short motif at 253 to 257 (KLSKR) is the 'KMSKS' region element. ATP is bound at residue Lys256.

Belongs to the class-I aminoacyl-tRNA synthetase family. Glutamate--tRNA ligase type 1 subfamily. As to quaternary structure, monomer.

It localises to the cytoplasm. The catalysed reaction is tRNA(Glu) + L-glutamate + ATP = L-glutamyl-tRNA(Glu) + AMP + diphosphate. Its function is as follows. Catalyzes the attachment of glutamate to tRNA(Glu) in a two-step reaction: glutamate is first activated by ATP to form Glu-AMP and then transferred to the acceptor end of tRNA(Glu). This Chlamydia trachomatis serovar A (strain ATCC VR-571B / DSM 19440 / HAR-13) protein is Glutamate--tRNA ligase.